The primary structure comprises 421 residues: Leucine-rich repeat-containing protein 42 (421 aa).

5 LRR repeats span residues 149–170 (VLCS…EEIK), 174–195 (ELTR…LEHL), 202–222 (SVTQ…RKMT), 234–255 (NLAL…GYLF), and 259–280 (KLNC…KDKL). Residues 376 to 406 (PLLSQESKKSKKRAFKESEQEQSSPQSAKQK) form a disordered region. The segment covering 396-406 (EQSSPQSAKQK) has biased composition (low complexity). Residue Ser-399 is modified to Phosphoserine.

The protein belongs to the LRRC42 family.

The chain is Leucine-rich repeat-containing protein 42 (Lrrc42) from Mus musculus (Mouse).